We begin with the raw amino-acid sequence, 320 residues long: Biotin synthase (320 aa).

The Radical SAM core domain maps to 39–267 (NAIQLATLLS…KARVRLSAGR (229 aa)). C54, C58, and C61 together coordinate [4Fe-4S] cluster. The [2Fe-2S] cluster site is built by C98, C130, C190, and R262.

It belongs to the radical SAM superfamily. Biotin synthase family. Homodimer. The cofactor is [4Fe-4S] cluster. [2Fe-2S] cluster serves as cofactor.

It carries out the reaction (4R,5S)-dethiobiotin + (sulfur carrier)-SH + 2 reduced [2Fe-2S]-[ferredoxin] + 2 S-adenosyl-L-methionine = (sulfur carrier)-H + biotin + 2 5'-deoxyadenosine + 2 L-methionine + 2 oxidized [2Fe-2S]-[ferredoxin]. It participates in cofactor biosynthesis; biotin biosynthesis; biotin from 7,8-diaminononanoate: step 2/2. Catalyzes the conversion of dethiobiotin (DTB) to biotin by the insertion of a sulfur atom into dethiobiotin via a radical-based mechanism. The sequence is that of Biotin synthase from Synechococcus elongatus (strain ATCC 33912 / PCC 7942 / FACHB-805) (Anacystis nidulans R2).